A 2155-amino-acid polypeptide reads, in one-letter code: Alpha-tectorin (2155 aa).

Residues 1 to 24 form the signal peptide; it reads MNYSSLLRIWVSFIFALVRHQAQP. Asn-34, Asn-187, Asn-215, Asn-278, Asn-455, Asn-506, Asn-528, and Asn-560 each carry an N-linked (GlcNAc...) asparagine glycan. An NIDO domain is found at 98–252; sequence PFWADVHNGI…GRWAFKVDGK (155 aa). Residues 260-314 form the VWFC domain; sequence CTSRGQFLRRGEVFWDDLNCTIKCRCLDFNNEIYCQEASCSPYEVCEPKGRFFYC. The VWFD 1 domain occupies 320–500; the sequence is STCVVFGEPH…RVYHADWKCG (181 aa). Intrachain disulfides connect Cys-322/Cys-461 and Cys-344/Cys-499. The 54-residue stretch at 597–650 folds into the TIL 1 domain; sequence CPSFSHYSVCTSSCPDTCSDLTASQNCATPCTEGCECNEGFVLSTSQCVPLHKC. Asn-670, Asn-687, Asn-813, Asn-843, Asn-855, Asn-898, Asn-920, Asn-931, and Asn-949 each carry an N-linked (GlcNAc...) asparagine glycan. In terms of domain architecture, VWFD 2 spans 711-886; that stretch reads TVCLLSQNQV…SWTTFEEICN (176 aa). Cys-713 and Cys-849 form a disulfide bridge. A TIL 2 domain is found at 984–1036; sequence CPENSHFEECMTCTETCETLALGPICVDSCSEGCQCDEGYALQGSQCVPRSEC. 4 N-linked (GlcNAc...) asparagine glycosylation sites follow: Asn-1048, Asn-1064, Asn-1235, and Asn-1364. In terms of domain architecture, VWFD 3 spans 1098–1278; it reads ASCIVSGYGH…SWVKRDTFCQ (181 aa). Cystine bridges form between Cys-1100–Cys-1241 and Cys-1122–Cys-1277. Positions 1372–1425 constitute a TIL 3 domain; that stretch reads CPPNSHYESCVSVCQPRCAAIRLKSDCNHYCVEGCQCDAGYVLNGKSCILPHNC. A VWFD 4 domain is found at 1485–1666; that stretch reads SYCLAAGGGV…QKRPLAPSCN (182 aa). Disulfide bonds link Cys-1487/Cys-1622, Cys-1509/Cys-1665, Cys-1717/Cys-1775, Cys-1741/Cys-1784, Cys-1786/Cys-1818, Cys-1806/Cys-1898, and Cys-1837/Cys-1857. N-linked (GlcNAc...) asparagine glycans are attached at residues Asn-1538, Asn-1565, Asn-1756, Asn-1772, Asn-1794, Asn-1851, Asn-1864, Asn-1880, Asn-1920, and Asn-1939. In terms of domain architecture, ZP spans 1805 to 2059; sequence TCKAAQMEVS…YSCKINCPQN (255 aa). Cystine bridges form between Cys-1980–Cys-2040, Cys-2001–Cys-2056, and Cys-2045–Cys-2052. Asn-2091 carries the GPI-anchor amidated asparagine lipid modification. Residues 2092 to 2155 constitute a propeptide, removed in mature form; it reads GGCEQICTSR…HLIYKSGATS (64 aa).

In terms of assembly, may form homomeric filament after self-association or heteromeric filament after association with beta-tectorin. Interacts with CEACAM16. 3 products of tectorin seem to exist: HMM, MMM and LMM. They may be generated by active processing or the result of proteolysis occurring between intrachain disulfide bonds. In terms of processing, the presence of a hydrophobic C-terminus preceded by a potential cleavage site strongly suggests that tectorins are synthesized as glycosylphosphatidylinositol-linked, membrane-bound precursors. Tectorins are targeted to the apical surface of the inner ear epithelia by the lipid and proteolytically released into the extracellular compartment. In terms of tissue distribution, cochlea-specific.

Its subcellular location is the cell membrane. It localises to the secreted. It is found in the extracellular space. The protein resides in the extracellular matrix. Its function is as follows. One of the major non-collagenous components of the tectorial membrane. The tectorial membrane is an extracellular matrix of the inner ear that covers the neuroepithelium of the cochlea and contacts the stereocilia bundles of specialized sensory hair cells. Sound induces movement of these hair cells relative to the tectorial membrane, deflects the stereocilia and leads to fluctuations in hair-cell membrane potential, transducing sound into electrical signals. The chain is Alpha-tectorin (Tecta) from Mus musculus (Mouse).